We begin with the raw amino-acid sequence, 624 residues long: MIAYDKSYDVVVVGGGHAGCEAALAAARMGCCTLLLSINLDAIALMSCNPAIGGLAKGHLVKEIDALGGEMAKNIDATGIQFRILNTKKGPAVRASRAQADKQQYRLRMKRILEHQDKLDLKQAEVTSLLVEDGNVVGVDTKAGVRYLGKTIILTTGTFMRGLIHIGLTHYPGGRAGDLPSVGLSVSLEECGFKVGRLKTGTPARLDGRTIDFSRLEPQYGDNPPIPFSFSTDKITQSQVPCHIAYTNERSHDIIRSGLDRSPLYSGIIEGVGPRYCPSIEDKVVRFPEKDRHQTFIEPEGVDTVEVYPSGLSTSLPIDVQWAFYRSIYGLERVEIMRPAYAIEYDYVDPIQLHASLETKVVGNLYHAGQINGTSGYEEAAAQGLIAGINAALRVQGKEPLILGRNDAYIGVMIDDLVTLGSKEPYRMFTSRAEYRLLLREDNADLRLCEKGYAIGLVREEEYRRFHAKKNMIEEELQRLRQEKLLPSEADDVFMEEFGLTGMQNAMTYEQLLRRPDIDSRELARIDKHIMEIPAAVREQVEIQIKYQGYIDRQLEQVERARKLESAKIPGDLEYAGLPGLSAEVREKLQQFRPDTLGQASRIPGVTPAAITILSIALKARNGR.

Residues 14–19, valine 126, and serine 181 contribute to the FAD site; that span reads GGGHAG. Residue 273 to 287 participates in NAD(+) binding; it reads GPRYCPSIEDKVVRF. Residue glutamine 370 participates in FAD binding.

Belongs to the MnmG family. In terms of assembly, homodimer. Heterotetramer of two MnmE and two MnmG subunits. FAD is required as a cofactor.

The protein localises to the cytoplasm. Functionally, NAD-binding protein involved in the addition of a carboxymethylaminomethyl (cmnm) group at the wobble position (U34) of certain tRNAs, forming tRNA-cmnm(5)s(2)U34. The polypeptide is tRNA uridine 5-carboxymethylaminomethyl modification enzyme MnmG (Geotalea uraniireducens (strain Rf4) (Geobacter uraniireducens)).